The following is a 507-amino-acid chain: Cytochrome P450 monooxygenase helB3 (507 aa).

An N-terminal signal peptide occupies residues 1–25 (MAVATLISILFAVLALRLCYLLIHA). Residues asparagine 111, asparagine 206, and asparagine 339 are each glycosylated (N-linked (GlcNAc...) asparagine). Cysteine 435 contacts heme.

Belongs to the cytochrome P450 family. Heme serves as cofactor.

It participates in mycotoxin biosynthesis. Its function is as follows. Cytochrome P450 monooxygenase; part of the gene cluster that mediates the biosynthesis of helvolic acid, an antibacterial nortriterpenoid. Protostadienol synthase helA cyclizes (3S)-oxidosqualene to (17Z)-protosta-17(20),24-dien-3-beta-ol (protostadienol). The synthesis of protostadienol is followed by several steps of monooxygenation, dehydrogenation, and acyl transfer to yield the final helvolic acid. Following the cyclization to the tetracyclic protostadienol by helA, cytochrome P450 monooxygenases helB1-mediated and helB2-mediated oxidation at C-4 and C-16, acyltransferase helD2-dependent acetylation of 16-OH, oxidation of C-21 by cytochrome P450 monooxygenase helB4, and short chain dehydrogenase helC-dependent oxidative decarboxylation yield the fusidane skeleton. This intermediate is further modified in three additional steps mediated by the cytochrome P450 monooxygenase helB3, the acyltransferase helD1, and the 3-ketosteroid 1-dehydrogenase helE to give helvolic acid. Compared with the late stages in the biosynthesis of helvolic acid, enzymes involved in the early stage modifications act in a relatively strict order. The hydroxylation of C-16 by helB1 and subsequent acetylation by helD2 should occur before the helB3-mediated oxidation of C-21. C-4 demethylation in fusidane-type antibiotics proceeds in an unusual manner though it is also achieved by oxidative decarboxylation. The methyl group at C-4 beta position is oxidized by helB1 and subsequently removed by the short chain dehydrogenase helC. This Aspergillus fumigatus (strain ATCC MYA-4609 / CBS 101355 / FGSC A1100 / Af293) (Neosartorya fumigata) protein is Cytochrome P450 monooxygenase helB3.